Here is a 435-residue protein sequence, read N- to C-terminus: MQAVSVGLFLFSMTWAAPKLNEDGSSGGNQGNIHLASVKPEPMVGKGTEGGRDAPLHLLDQNRQGATLLRNITQPVKSLVTGTEVQSDRNKEKKPQSVLSVIPTDVHNTNDYSEDTENQQRDLLLQNSPGQSKHTPRARRSTHYLTHLPQIRKILSDFEDSASPDLLVRGDNDVPPFSGDGQHFMHTPDRGGAVGSDPESSAGHPVSGSSNVEIVDPHTNGLGSNEIPGREGHIGGAYATRGKTAQGAGSADVSLVEGSNEITGSTKFRELPGKEGNRVDASSQNAHQGKVEFHYPQAPSKEKVKGGSREHTGKAGYNEIPKSSKGGASKDAEESKGNQVTLTESQRFPGKGKGQSSHSLGNEVKSEEDSSNSLSREGIAIAHRRTSHPTRNRGMSQRRGSWASRRPHPHRRVSTRQRDSSESSSSGSSSESSGD.

Positions 1–16 are cleaved as a signal peptide; that stretch reads MQAVSVGLFLFSMTWA. An N-linked (GlcNAc...) asparagine glycan is attached at N71. Disordered stretches follow at residues 124–145 and 166–435; these read LLQNSPGQSKHTPRARRSTHYL and LLVR…SSGD. The dentonin stretch occupies residues 164 to 186; sequence PDLLVRGDNDVPPFSGDGQHFMH. The short motif at 169-171 is the Cell attachment site element; sequence RGD. S178 carries O-linked (Xyl...) (chondroitin sulfate) serine glycosylation. Basic and acidic residues-rich tracts occupy residues 267–278 and 300–313; these read KFRELPGKEGNR and SKEKVKGGSREHTG. Polar residues predominate over residues 337–346; it reads GNQVTLTESQ. 2 stretches are compositionally biased toward basic residues: residues 382 to 391 and 405 to 415; these read AHRRTSHPTR and RRPHPHRRVST. Residues 418–435 form an ASARM motif; interaction with PHEX region; the sequence is RDSSESSSSGSSSESSGD. Positions 422 to 435 are enriched in low complexity; it reads ESSSSGSSSESSGD.

This sequence belongs to the PF07175/osteoregulin family. As to quaternary structure, interacts (via ASARM motif) with PHEX; the interaction is zinc-dependent. In terms of processing, phosphorylated on serine residues in the ASARM motif; the phosphorylation is important for the inhibition of bone mineralization. Cleaved by CTSB/cathepsin B; the cleavage is blocked by metalloprotease PHEX. As to expression, expressed in osteoblasts and osteocytes.

It is found in the secreted. Its subcellular location is the extracellular space. The protein resides in the extracellular matrix. Functionally, regulates renal phosphate excretion. Regulates bone mineralization by osteoblasts and cartilage mineralization by chondrocytes. Regulates the mineralization of the extracellular matrix of the craniofacial complex, such as teeth, bone and cartilage. Increases dental pulp stem cell proliferation. The sequence is that of Matrix extracellular phosphoglycoprotein from Rattus norvegicus (Rat).